The primary structure comprises 368 residues: Type 2 DNA topoisomerase 6 subunit A (368 aa).

The Topo IIA-type catalytic domain occupies 9-148 (PDTEEAREQL…FHMRPEESGA (140 aa)). The O-(5'-phospho-DNA)-tyrosine intermediate role is filled by Tyr-103. 2 residues coordinate Mg(2+): Glu-201 and Asp-253.

This sequence belongs to the TOP6A family. Homodimer. Heterotetramer of two Top6A and two Top6B chains. Requires Mg(2+) as cofactor.

It carries out the reaction ATP-dependent breakage, passage and rejoining of double-stranded DNA.. In terms of biological role, relaxes both positive and negative superturns and exhibits a strong decatenase activity. The chain is Type 2 DNA topoisomerase 6 subunit A from Haloarcula marismortui (strain ATCC 43049 / DSM 3752 / JCM 8966 / VKM B-1809) (Halobacterium marismortui).